A 131-amino-acid chain; its full sequence is Translation initiation factor 5A (131 aa).

A Hypusine modification is found at Lys-37.

This sequence belongs to the eIF-5A family.

It is found in the cytoplasm. Its function is as follows. Functions by promoting the formation of the first peptide bond. This Methanococcus maripaludis (strain C7 / ATCC BAA-1331) protein is Translation initiation factor 5A (eIF5A).